A 255-amino-acid chain; its full sequence is Putative ankyrin repeat protein R880 (255 aa).

ANK repeat units follow at residues 79–109, 110–139, 141–169, 171–199, and 201–229; these read SGIN…DIHY, KTDY…NINT, DCYA…NVRK, RDLA…DVRS, and KNYA…NFRV.

This Acanthamoeba polyphaga (Amoeba) protein is Putative ankyrin repeat protein R880.